The following is a 745-amino-acid chain: Probable xanthine dehydrogenase subunit D (745 aa).

Mo-molybdopterin contacts are provided by Gln-204, Phe-235, and Ala-508.

It belongs to the xanthine dehydrogenase family. As to quaternary structure, could be composed of four subunits: PucA, PucC, PucD and PucE. It depends on Mo-molybdopterin as a cofactor.

The enzyme catalyses xanthine + NAD(+) + H2O = urate + NADH + H(+). It carries out the reaction hypoxanthine + NAD(+) + H2O = xanthine + NADH + H(+). Its pathway is purine metabolism; hypoxanthine degradation; urate from hypoxanthine: step 1/2. It participates in purine metabolism; hypoxanthine degradation; urate from hypoxanthine: step 2/2. Oxidizes hypoxanthine and xanthine to uric acid. The chain is Probable xanthine dehydrogenase subunit D (pucD) from Bacillus subtilis (strain 168).